We begin with the raw amino-acid sequence, 86 residues long: Large ribosomal subunit protein uL23 (86 aa).

This sequence belongs to the universal ribosomal protein uL23 family. In terms of assembly, part of the 50S ribosomal subunit. Contacts protein L29.

Functionally, binds to 23S rRNA. One of the proteins that surrounds the polypeptide exit tunnel on the outside of the ribosome. The polypeptide is Large ribosomal subunit protein uL23 (Methanococcus maripaludis (strain DSM 14266 / JCM 13030 / NBRC 101832 / S2 / LL)).